A 754-amino-acid polypeptide reads, in one-letter code: 1,4-alpha-glucan branching enzyme GlgB (754 aa).

Catalysis depends on aspartate 431, which acts as the Nucleophile. Glutamate 484 functions as the Proton donor in the catalytic mechanism.

The protein belongs to the glycosyl hydrolase 13 family. GlgB subfamily. In terms of assembly, monomer.

The enzyme catalyses Transfers a segment of a (1-&gt;4)-alpha-D-glucan chain to a primary hydroxy group in a similar glucan chain.. The protein operates within glycan biosynthesis; glycogen biosynthesis. Its function is as follows. Catalyzes the formation of the alpha-1,6-glucosidic linkages in glycogen by scission of a 1,4-alpha-linked oligosaccharide from growing alpha-1,4-glucan chains and the subsequent attachment of the oligosaccharide to the alpha-1,6 position. This chain is 1,4-alpha-glucan branching enzyme GlgB, found in Prochlorococcus marinus subsp. pastoris (strain CCMP1986 / NIES-2087 / MED4).